Here is a 197-residue protein sequence, read N- to C-terminus: Ribonuclease HII (197 aa).

The RNase H type-2 domain maps to 9–197; it reads ELIAGVDEVG…APVKKALEQF (189 aa). Positions 15, 16, and 107 each coordinate a divalent metal cation.

This sequence belongs to the RNase HII family. The cofactor is Mn(2+). It depends on Mg(2+) as a cofactor.

It is found in the cytoplasm. The catalysed reaction is Endonucleolytic cleavage to 5'-phosphomonoester.. Endonuclease that specifically degrades the RNA of RNA-DNA hybrids. The polypeptide is Ribonuclease HII (Haemophilus influenzae (strain PittGG)).